Reading from the N-terminus, the 308-residue chain is MEHITVLLQEAVDGLAIRPDGIYVDGTFGRGGHSRLILQQLGPQGRLYAIDRDPQAVAVAKEWQDPRFEIISGPFSSLHEYMAERGLLGKVDGLLLDLGVSSPQLDEAERGFSFMNDGPLDMRMDPLHGESAAEWLLHADVDDIAWVLRTYGEERFANRIARAIVADRVTTPYTRTRQLAEMIARVVPNKEKHKHPATRSFQALRIHVNQELKEIEETLKASLSVLAPGGRLAVISFHSLEDRIVKQFIRQQEKGIQPPRGLPITEDQIRKTQTLHSVGKAIKPADSEVSDNVRSRSSVLRVAERLGG.

S-adenosyl-L-methionine-binding positions include 31–33, aspartate 51, phenylalanine 75, aspartate 97, and glutamine 104; that span reads GGH.

Belongs to the methyltransferase superfamily. RsmH family.

It is found in the cytoplasm. It carries out the reaction cytidine(1402) in 16S rRNA + S-adenosyl-L-methionine = N(4)-methylcytidine(1402) in 16S rRNA + S-adenosyl-L-homocysteine + H(+). Its function is as follows. Specifically methylates the N4 position of cytidine in position 1402 (C1402) of 16S rRNA. This chain is Ribosomal RNA small subunit methyltransferase H, found in Tolumonas auensis (strain DSM 9187 / NBRC 110442 / TA 4).